A 202-amino-acid chain; its full sequence is MSRYRGPRMKIIRRLGSLPGLTNKVLRSKPGYTDQLISNKKVSQYRIRLEEKQKLRFHYGLTERQLLKYVRIARKAKGSTGNVLLQLLEMRLDNVIFRLGMSSTIPGARQLVNHRHIMINDEMVDTPGYNCKPRDIITLKNISESRSGIPKGIDSSQRSRTPNHLVFDSSRGVGFVNQIIDREWISLKINELLVVEYYSRQA.

One can recognise an S4 RNA-binding domain in the interval methionine 90–glycine 148.

The protein belongs to the universal ribosomal protein uS4 family. Part of the 30S ribosomal subunit. Contacts protein S5. The interaction surface between S4 and S5 is involved in control of translational fidelity.

It is found in the plastid. It localises to the chloroplast. Its function is as follows. One of the primary rRNA binding proteins, it binds directly to 16S rRNA where it nucleates assembly of the body of the 30S subunit. With S5 and S12 plays an important role in translational accuracy. The sequence is that of Small ribosomal subunit protein uS4c (rps4) from Haplomitrium hookeri (Hooker's flapwort).